Here is a 614-residue protein sequence, read N- to C-terminus: Acetylcholinesterase (614 aa).

The signal sequence occupies residues 1–31 (MRPPQCLLHTPSLASPLLLLLLWLLGGGVGA). Cysteines 100 and 127 form a disulfide. Tryptophan 117 is a galanthamine binding site. Tryptophan 117 serves as a coordination point for huperzine A. A huprine W-binding site is contributed by glycine 153. Tyrosine 164 lines the huperzine A pocket. 233-234 (ES) provides a ligand contact to galanthamine. Residue serine 234 participates in huprine W binding. The Acyl-ester intermediate role is filled by serine 234. An intrachain disulfide couples cysteine 288 to cysteine 303. N-linked (GlcNAc...) asparagine glycosylation occurs at asparagine 296. Glutamate 365 acts as the Charge relay system in catalysis. Tyrosine 368 lines the galanthamine pocket. Residue tyrosine 368 coordinates huperzine A. N-linked (GlcNAc...) asparagine glycosylation is present at asparagine 381. An intrachain disulfide couples cysteine 440 to cysteine 560. The huprine W site is built by tryptophan 470 and histidine 478. Histidine 478 functions as the Charge relay system in the catalytic mechanism. Asparagine 495 carries an N-linked (GlcNAc...) asparagine glycan. A lipid anchor (GPI-anchor amidated glycine) is attached at phenylalanine 588.

This sequence belongs to the type-B carboxylesterase/lipase family. As to quaternary structure, interacts with PRIMA1. The interaction with PRIMA1 is required to anchor it to the basal lamina of cells and organize into tetramers. Isoform H generates GPI-anchored dimers; disulfide linked. Isoform T generates multiple structures, ranging from monomers and dimers to collagen-tailed and hydrophobic-tailed forms, in which catalytic tetramers are associated with anchoring proteins that attach them to the basal lamina or to cell membranes. In the collagen-tailed forms, isoform T subunits are associated with a specific collagen, COLQ, which triggers the formation of isoform T tetramers, from monomers and dimers. Isoform R may be monomeric. As to expression, isoform H is highly expressed in erythrocytes.

The protein localises to the synapse. Its subcellular location is the secreted. The protein resides in the cell membrane. It is found in the nucleus. The enzyme catalyses acetylcholine + H2O = choline + acetate + H(+). In terms of biological role, hydrolyzes rapidly the acetylcholine neurotransmitter released into the synaptic cleft allowing to terminate the signal transduction at the neuromuscular junction. Role in neuronal apoptosis. The protein is Acetylcholinesterase of Homo sapiens (Human).